The following is a 313-amino-acid chain: MEGKNLTSISEFFLLGFSEQLEEQKALFGSFLFMYLVTVAGNLLIILVIITDTQLHTPMYFFLANLSLADACFVSTTVPKMLANIQIQSQAISYSGCLLQLYFFMLFVMLEAFLLAVMAYDRYVAICHPLHYILIMSPGLCVFLVSASWIMNALHSLLHTLLMNSLSFCANHEIPHFFCDIDPLLSLSCTDPFTNELVIFITGGLTGLVCVLCLIISYTNIFSTILKIPSAQGKRKAFSTCGSHLSVVSLFFGTSFCVYFIPPSTRSAQKDTVASVMYTVVTPMLNPFIYSLRNQEIKSSLRKLIWVREIHSP.

Over 1-25 (MEGKNLTSISEFFLLGFSEQLEEQK) the chain is Extracellular. Residue Asn5 is glycosylated (N-linked (GlcNAc...) asparagine). The helical transmembrane segment at 26 to 49 (ALFGSFLFMYLVTVAGNLLIILVI) threads the bilayer. Topologically, residues 50–57 (ITDTQLHT) are cytoplasmic. Residues 58–79 (PMYFFLANLSLADACFVSTTVP) traverse the membrane as a helical segment. Over 80–100 (KMLANIQIQSQAISYSGCLLQ) the chain is Extracellular. An intrachain disulfide couples Cys97 to Cys189. The chain crosses the membrane as a helical span at residues 101–120 (LYFFMLFVMLEAFLLAVMAY). Residues 121–140 (DRYVAICHPLHYILIMSPGL) lie on the Cytoplasmic side of the membrane. Residues 141–158 (CVFLVSASWIMNALHSLL) traverse the membrane as a helical segment. The Extracellular segment spans residues 159–196 (HTLLMNSLSFCANHEIPHFFCDIDPLLSLSCTDPFTNE). A helical membrane pass occupies residues 197–219 (LVIFITGGLTGLVCVLCLIISYT). At 220 to 236 (NIFSTILKIPSAQGKRK) the chain is on the cytoplasmic side. Residues 237–259 (AFSTCGSHLSVVSLFFGTSFCVY) form a helical membrane-spanning segment. The Extracellular segment spans residues 260 to 272 (FIPPSTRSAQKDT). Residues 273–292 (VASVMYTVVTPMLNPFIYSL) traverse the membrane as a helical segment. At 293 to 313 (RNQEIKSSLRKLIWVREIHSP) the chain is on the cytoplasmic side.

Belongs to the G-protein coupled receptor 1 family.

The protein resides in the cell membrane. In terms of biological role, odorant receptor. This Gorilla gorilla gorilla (Western lowland gorilla) protein is Olfactory receptor 1G1 (OR1G1).